The primary structure comprises 383 residues: Sulfate adenylyltransferase (383 aa).

Belongs to the sulfate adenylyltransferase family.

It carries out the reaction sulfate + ATP + H(+) = adenosine 5'-phosphosulfate + diphosphate. It participates in sulfur metabolism; hydrogen sulfide biosynthesis; sulfite from sulfate: step 1/3. This chain is Sulfate adenylyltransferase (sat), found in Aeropyrum pernix (strain ATCC 700893 / DSM 11879 / JCM 9820 / NBRC 100138 / K1).